Here is a 377-residue protein sequence, read N- to C-terminus: Glutamate 5-kinase (377 aa).

Lys22 provides a ligand contact to ATP. 3 residues coordinate substrate: Ser62, Asp149, and Asn161. ATP-binding positions include 181–182 (TD) and 223–229 (TGGMVTK). Positions 285 to 363 (RGTIVVDAGA…AQLKRFLGPQ (79 aa)) constitute a PUA domain.

Belongs to the glutamate 5-kinase family.

It is found in the cytoplasm. It carries out the reaction L-glutamate + ATP = L-glutamyl 5-phosphate + ADP. It participates in amino-acid biosynthesis; L-proline biosynthesis; L-glutamate 5-semialdehyde from L-glutamate: step 1/2. Functionally, catalyzes the transfer of a phosphate group to glutamate to form L-glutamate 5-phosphate. This is Glutamate 5-kinase from Bifidobacterium longum (strain DJO10A).